Reading from the N-terminus, the 364-residue chain is Cell division protein FtsZ 1 (364 aa).

Residues 47–48 (GA), 97–99 (AGG), 134–136 (GTG), E165, R169, and D212 contribute to the GTP site.

Belongs to the FtsZ family. Homodimer. Polymerizes to form a dynamic ring structure in a strictly GTP-dependent manner. Interacts directly with several other division proteins.

Its subcellular location is the cytoplasm. In terms of biological role, essential cell division protein that forms a contractile ring structure (Z ring) at the future cell division site. The regulation of the ring assembly controls the timing and the location of cell division. One of the functions of the FtsZ ring is to recruit other cell division proteins to the septum to produce a new cell wall between the dividing cells. Binds GTP and shows GTPase activity. In Methanocaldococcus jannaschii (strain ATCC 43067 / DSM 2661 / JAL-1 / JCM 10045 / NBRC 100440) (Methanococcus jannaschii), this protein is Cell division protein FtsZ 1.